We begin with the raw amino-acid sequence, 145 residues long: uncharacterized protein (145 aa).

Residues 1-145 form the CBM3 domain; that stretch reads LQYRAADTNA…NGQIVWGTAP (145 aa).

This is an uncharacterized protein from Paenibacillus lautus (Bacillus lautus).